We begin with the raw amino-acid sequence, 505 residues long: Putative F-box protein At1g58310 (505 aa).

One can recognise an F-box domain in the interval 7–55 (RDIISGLPDSLLCHILSFLNTKEAASTSVLAKKWRYLFASVPNLDFDDS).

This chain is Putative F-box protein At1g58310, found in Arabidopsis thaliana (Mouse-ear cress).